The primary structure comprises 430 residues: Glutamyl-tRNA reductase (430 aa).

Substrate contacts are provided by residues 50–53 (TCNR), serine 108, 113–115 (EPQ), and glutamine 119. Cysteine 51 acts as the Nucleophile in catalysis. 188-193 (GAGEMA) serves as a coordination point for NADP(+).

It belongs to the glutamyl-tRNA reductase family. Homodimer.

It carries out the reaction (S)-4-amino-5-oxopentanoate + tRNA(Glu) + NADP(+) = L-glutamyl-tRNA(Glu) + NADPH + H(+). The protein operates within porphyrin-containing compound metabolism; protoporphyrin-IX biosynthesis; 5-aminolevulinate from L-glutamyl-tRNA(Glu): step 1/2. Functionally, catalyzes the NADPH-dependent reduction of glutamyl-tRNA(Glu) to glutamate 1-semialdehyde (GSA). The polypeptide is Glutamyl-tRNA reductase (Lawsonia intracellularis (strain PHE/MN1-00)).